We begin with the raw amino-acid sequence, 149 residues long: UPF0178 protein Pmen_0294 (149 aa).

It belongs to the UPF0178 family.

This chain is UPF0178 protein Pmen_0294, found in Ectopseudomonas mendocina (strain ymp) (Pseudomonas mendocina).